Reading from the N-terminus, the 143-residue chain is Protein SLC31A2 (143 aa).

Residues methionine 1–serine 22 lie on the Extracellular side of the membrane. A helical transmembrane segment spans residues proline 23–isoleucine 43. Topologically, residues lysine 44–tyrosine 93 are cytoplasmic. Threonine 75 is subject to Phosphothreonine. Serine 77 is modified (phosphoserine). A helical transmembrane segment spans residues phenylalanine 94–valine 114. Residues methionine 115–threonine 119 lie on the Extracellular side of the membrane. The chain crosses the membrane as a helical span at residues tryptophan 120–leucine 140. The Cytoplasmic segment spans residues asparagine 141–threonine 143.

Belongs to the copper transporter (Ctr) (TC 1.A.56) family. SLC31A subfamily. Oligomer. Interacts with SLC31A1; this interaction stabilizes SLC31A2 and protects it from ubiquitination and the subsequent degradation. In terms of processing, ubiquitinated; ubiquitination and the subsequent proteasomal degradation are prevent by SLC31A1 that stabilizes it.

The protein localises to the membrane. Its subcellular location is the cytoplasmic vesicle membrane. The protein resides in the late endosome membrane. It is found in the lysosome membrane. It localises to the recycling endosome membrane. Functionally, does not function as a copper(1+) importer in vivo. However, in vitro functions as a low-affinity copper(1+) importer. Regulator of SLC31A1 which facilitates the cleavage of the SLC31A1 ecto-domain or which stabilizes the truncated form of SLC31A1 (Truncated CTR1 form), thereby drives the SLC31A1 truncated form-dependent endosomal copper export and modulates the copper and cisplatin accumulation via SLC31A1. The sequence is that of Protein SLC31A2 from Mus musculus (Mouse).